A 433-amino-acid polypeptide reads, in one-letter code: Protein CLP1 homolog (433 aa).

ATP is bound by residues Glu-22, Arg-61, and 128–133 (DVGKTT).

The protein belongs to the Clp1 family. Clp1 subfamily.

It localises to the nucleus. Its function is as follows. Required for endonucleolytic cleavage during polyadenylation-dependent pre-mRNA 3'-end formation. The sequence is that of Protein CLP1 homolog from Brugia malayi (Filarial nematode worm).